The following is a 29-amino-acid chain: Varv peptide E (29 aa).

A cross-link (cyclopeptide (Gly-Asn)) is located at residues 1-29; sequence GLPICGETCVGGTCNTPGCSCSWPVCTRN. 3 disulfides stabilise this stretch: C5/C19, C9/C21, and C14/C26.

Post-translationally, this is a cyclic peptide.

Probably participates in a plant defense mechanism. Has cytotoxic activity against human lymphoma U-937 GTB and human myeloma RPMI-8226/s cell lines. This chain is Varv peptide E, found in Viola arvensis (European field pansy).